The primary structure comprises 294 residues: Acetyl-coenzyme A carboxylase carboxyl transferase subunit beta (294 aa).

The region spanning 29–294 (LWEKCPECGQ…TQEVKLQTNA (266 aa)) is the CoA carboxyltransferase N-terminal domain. Zn(2+) is bound by residues C33, C36, C52, and C55. The C4-type zinc finger occupies 33–55 (CPECGQVVYRKDLIDNCSVCSNC).

This sequence belongs to the AccD/PCCB family. Acetyl-CoA carboxylase is a heterohexamer composed of biotin carboxyl carrier protein (AccB), biotin carboxylase (AccC) and two subunits each of ACCase subunit alpha (AccA) and ACCase subunit beta (AccD). The cofactor is Zn(2+).

It is found in the cytoplasm. The catalysed reaction is N(6)-carboxybiotinyl-L-lysyl-[protein] + acetyl-CoA = N(6)-biotinyl-L-lysyl-[protein] + malonyl-CoA. It participates in lipid metabolism; malonyl-CoA biosynthesis; malonyl-CoA from acetyl-CoA: step 1/1. Functionally, component of the acetyl coenzyme A carboxylase (ACC) complex. Biotin carboxylase (BC) catalyzes the carboxylation of biotin on its carrier protein (BCCP) and then the CO(2) group is transferred by the transcarboxylase to acetyl-CoA to form malonyl-CoA. This is Acetyl-coenzyme A carboxylase carboxyl transferase subunit beta from Prochlorococcus marinus (strain NATL1A).